A 392-amino-acid polypeptide reads, in one-letter code: 2,3-bisphosphoglycerate-independent phosphoglycerate mutase (392 aa).

The protein belongs to the BPG-independent phosphoglycerate mutase family. A-PGAM subfamily.

The catalysed reaction is (2R)-2-phosphoglycerate = (2R)-3-phosphoglycerate. The protein operates within carbohydrate degradation; glycolysis; pyruvate from D-glyceraldehyde 3-phosphate: step 3/5. In terms of biological role, catalyzes the interconversion of 2-phosphoglycerate and 3-phosphoglycerate. In Methanothrix thermoacetophila (strain DSM 6194 / JCM 14653 / NBRC 101360 / PT) (Methanosaeta thermophila), this protein is 2,3-bisphosphoglycerate-independent phosphoglycerate mutase.